The sequence spans 66 residues: uncharacterized protein (66 aa).

This is an uncharacterized protein from Homo sapiens (Human).